A 66-amino-acid polypeptide reads, in one-letter code: Large ribosomal subunit protein uL29 (66 aa).

The protein belongs to the universal ribosomal protein uL29 family.

This is Large ribosomal subunit protein uL29 from Nitrosococcus oceani (strain ATCC 19707 / BCRC 17464 / JCM 30415 / NCIMB 11848 / C-107).